The chain runs to 215 residues: Protein GET1 (215 aa).

Residues 1-4 are Lumenal-facing; the sequence is MPSL. The chain crosses the membrane as a helical span at residues 5–24; that stretch reads LILIFTIEVAVELINTIGAA. The Cytoplasmic portion of the chain corresponds to 25–110; sequence TINNLLWRIF…NFDKYITGIR (86 aa). Residues 72-104 adopt a coiled-coil conformation; it reads AKWAKLRRQHDKLLEQLEKKKAALDSTKGNFDK. A helical membrane pass occupies residues 111–131; that stretch reads WVGTQGLRYFLPFWYAKVPMF. The Lumenal segment spans residues 132-155; that stretch reads WLPYGWFPYYAEWLVSFPRAPMGS. The chain crosses the membrane as a helical span at residues 156–172; it reads VSIASWQLACTGFVVLI. The Cytoplasmic segment spans residues 173-215; that stretch reads KDAITALVVFVMGMRQSNVKQAVPVKAVSGEKASDEKEGKKEL.

The protein belongs to the WRB/GET1 family. As to quaternary structure, interacts with GET3.

It localises to the endoplasmic reticulum membrane. Functionally, required for the post-translational delivery of tail-anchored (TA) proteins to the endoplasmic reticulum. Acts as a membrane receptor for soluble GET3, which recognizes and selectively binds the transmembrane domain of TA proteins in the cytosol. This Pyricularia oryzae (strain 70-15 / ATCC MYA-4617 / FGSC 8958) (Rice blast fungus) protein is Protein GET1.